Here is a 358-residue protein sequence, read N- to C-terminus: Putative purine permease 12 (358 aa).

A run of 10 helical transmembrane segments spans residues 29–49 (WILV…SVLL), 62–82 (WIST…LSLL), 100–120 (LVWI…LYSV), 128–148 (STYS…YYYI), 153–173 (ITCL…LVSL), 189–209 (LIGC…LSLM), 235–255 (VASC…LLSV), 280–299 (LGCV…FSNL), 300–316 (ISTL…IAVF), and 320–340 (LTEV…FYIY).

This sequence belongs to the purine permeases (TC 2.A.7.14) family.

It is found in the membrane. The chain is Putative purine permease 12 (PUP12) from Arabidopsis thaliana (Mouse-ear cress).